We begin with the raw amino-acid sequence, 50 residues long: Small, acid-soluble spore protein P (50 aa).

The tract at residues 1 to 50 (MSKRKMGPKQQKNPELPKSPEQPYGEPLSGSKKEKKANHSGQKHNPHHGL) is disordered. Residues 33-50 (KEKKANHSGQKHNPHHGL) show a composition bias toward basic residues.

Belongs to the SspP family.

The protein localises to the spore core. This Oceanobacillus iheyensis (strain DSM 14371 / CIP 107618 / JCM 11309 / KCTC 3954 / HTE831) protein is Small, acid-soluble spore protein P.